The primary structure comprises 349 residues: tRNA pseudouridine synthase D (349 aa).

Substrate is bound at residue phenylalanine 27. Aspartate 80 acts as the Nucleophile in catalysis. Asparagine 129 is a binding site for substrate. Positions 155–303 (GVPNYFGAQR…VEASRRAMLL (149 aa)) constitute a TRUD domain. Residue phenylalanine 329 participates in substrate binding.

The protein belongs to the pseudouridine synthase TruD family.

The catalysed reaction is uridine(13) in tRNA = pseudouridine(13) in tRNA. Responsible for synthesis of pseudouridine from uracil-13 in transfer RNAs. The chain is tRNA pseudouridine synthase D from Salmonella newport (strain SL254).